The sequence spans 858 residues: DNA mismatch repair protein MutS (858 aa).

618–625 (GPNMGGKS) contacts ATP.

It belongs to the DNA mismatch repair MutS family.

In terms of biological role, this protein is involved in the repair of mismatches in DNA. It is possible that it carries out the mismatch recognition step. This protein has a weak ATPase activity. The sequence is that of DNA mismatch repair protein MutS from Shewanella woodyi (strain ATCC 51908 / MS32).